The sequence spans 565 residues: Proline--tRNA ligase (565 aa).

It belongs to the class-II aminoacyl-tRNA synthetase family. ProS type 1 subfamily. As to quaternary structure, homodimer.

The protein resides in the cytoplasm. The catalysed reaction is tRNA(Pro) + L-proline + ATP = L-prolyl-tRNA(Pro) + AMP + diphosphate. Functionally, catalyzes the attachment of proline to tRNA(Pro) in a two-step reaction: proline is first activated by ATP to form Pro-AMP and then transferred to the acceptor end of tRNA(Pro). As ProRS can inadvertently accommodate and process non-cognate amino acids such as alanine and cysteine, to avoid such errors it has two additional distinct editing activities against alanine. One activity is designated as 'pretransfer' editing and involves the tRNA(Pro)-independent hydrolysis of activated Ala-AMP. The other activity is designated 'posttransfer' editing and involves deacylation of mischarged Ala-tRNA(Pro). The misacylated Cys-tRNA(Pro) is not edited by ProRS. The chain is Proline--tRNA ligase from Francisella tularensis subsp. holarctica (strain FTNF002-00 / FTA).